Reading from the N-terminus, the 221-residue chain is MLRRLVTSSLSASRSMSASVQSRVGIPFVIDNEGKGERTYDIYSRLLRDRIVCLMTPVDDFIASALIAQLLFLQSESGKKPIHMYINSPGGSVTAGLAIYDTIQMISAPVSTWVIGQASSMGSLLLCAGEKGMRSALPNSRIMVHQPSGGAQGTCSDIVIRAEEITRLKRRLNEIYVHHTGMSYDEIEKTLDRDRFMSAHEALKFGLVDQIETHNGSMPSD.

Residues 1-25 constitute a mitochondrion transit peptide; it reads MLRRLVTSSLSASRSMSASVQSRVG. Residue S120 is the Nucleophile of the active site. The active site involves H145.

It belongs to the peptidase S14 family. In terms of assembly, tetradecamer that assembles into a two heptameric rings with a central cavity. In terms of tissue distribution, expressed in the intestine.

It is found in the mitochondrion matrix. The catalysed reaction is Hydrolysis of proteins to small peptides in the presence of ATP and magnesium. alpha-casein is the usual test substrate. In the absence of ATP, only oligopeptides shorter than five residues are hydrolyzed (such as succinyl-Leu-Tyr-|-NHMec, and Leu-Tyr-Leu-|-Tyr-Trp, in which cleavage of the -Tyr-|-Leu- and -Tyr-|-Trp bonds also occurs).. In terms of biological role, clp cleaves peptides in various proteins in a process that requires ATP hydrolysis. Clp may be responsible for a fairly general and central housekeeping function rather than for the degradation of specific substrates. The protein is ATP-dependent Clp protease proteolytic subunit 1, mitochondrial (clpp-1) of Caenorhabditis elegans.